The following is a 437-amino-acid chain: Glycogen synthase (437 aa).

An ADP-alpha-D-glucose-binding site is contributed by Lys15.

The protein belongs to the glycosyltransferase 1 family. Bacterial/plant glycogen synthase subfamily.

It catalyses the reaction [(1-&gt;4)-alpha-D-glucosyl](n) + ADP-alpha-D-glucose = [(1-&gt;4)-alpha-D-glucosyl](n+1) + ADP + H(+). Its pathway is glycan biosynthesis; glycogen biosynthesis. In terms of biological role, synthesizes alpha-1,4-glucan chains using ADP-glucose. The protein is Glycogen synthase of Thermus thermophilus (strain ATCC BAA-163 / DSM 7039 / HB27).